Here is a 554-residue protein sequence, read N- to C-terminus: Formate--tetrahydrofolate ligase (554 aa).

An ATP-binding site is contributed by 65 to 72 (TPLGEGKT).

This sequence belongs to the formate--tetrahydrofolate ligase family.

It catalyses the reaction (6S)-5,6,7,8-tetrahydrofolate + formate + ATP = (6R)-10-formyltetrahydrofolate + ADP + phosphate. It participates in one-carbon metabolism; tetrahydrofolate interconversion. This chain is Formate--tetrahydrofolate ligase, found in Aliivibrio salmonicida (strain LFI1238) (Vibrio salmonicida (strain LFI1238)).